Reading from the N-terminus, the 309-residue chain is Elongation factor Ts (309 aa).

The tract at residues 82–85 (TDFV) is involved in Mg(2+) ion dislocation from EF-Tu.

The protein belongs to the EF-Ts family.

The protein resides in the cytoplasm. Its function is as follows. Associates with the EF-Tu.GDP complex and induces the exchange of GDP to GTP. It remains bound to the aminoacyl-tRNA.EF-Tu.GTP complex up to the GTP hydrolysis stage on the ribosome. The chain is Elongation factor Ts from Rickettsia typhi (strain ATCC VR-144 / Wilmington).